We begin with the raw amino-acid sequence, 922 residues long: TBC1 domain family member 2A (922 aa).

The tract at residues 1 to 37 (MEDAPERTPSSSESTQPPGLAREPEVVSPGDSEGCAR) is disordered. The tract at residues 1-168 (MEDAPERTPS…AENGPTLHLK (168 aa)) is interaction with CADH1. A compositionally biased stretch (polar residues) spans 8–17 (TPSSSESTQP). In terms of domain architecture, PH spans 43-141 (PKKLCGYLSK…WLQQLQMKRW (99 aa)). Residues 228–297 (NKQAQAAAHG…KRQSNTFPFF (70 aa)) are disordered. The segment covering 262–271 (LPEKEPEDPA) has biased composition (basic and acidic residues). The segment covering 275–295 (PRSSVPSGPTQKPKRQSNTFP) has biased composition (polar residues). The tract at residues 298-435 (SDGLARSRTA…QKLTEDLAQP (138 aa)) is interaction with RAC1. Coiled coils occupy residues 302-333 (ARSR…ELVI), 362-417 (LELV…NHAK), and 443-476 (FLSQ…QVTK). One can recognise a Rab-GAP TBC domain in the interval 619–811 (GVPREHRPRV…RVWDAFLYEG (193 aa)). The stretch at 869–904 (MKQLRQLRAAHRERLEAELRELELLKVEYLQRRASL) forms a coiled coil. Ser-914 is modified (phosphoserine).

As to quaternary structure, interacts with activated RAC1 and CDH1.

It localises to the cytoplasm. Its subcellular location is the cytoplasmic vesicle. It is found in the cell junction. Its function is as follows. Acts as a GTPase-activating protein for RAB7A. Signal effector acting as a linker between RAC1 and RAB7A, leading to RAB7A inactivation and subsequent inhibition of cadherin degradation and reduced cell-cell adhesion. In Mus musculus (Mouse), this protein is TBC1 domain family member 2A (Tbc1d2).